Reading from the N-terminus, the 573-residue chain is Protein FAM200A (573 aa).

The segment at 1 to 51 (MTPESRDTTDLSPRGTQEMEGIVVVKVEEEDEEDHFQKQRNKVESSPQVLS) is disordered. The Extracellular segment spans residues 1 to 513 (MTPESRDTTD…DEFPLLSRKS (513 aa)). A helical transmembrane segment spans residues 514-533 (ISLLLPFTTTYLCELGFSIL). The Cytoplasmic portion of the chain corresponds to 534-573 (TRLKTKKRNRLNSAPDMRVALSSCVPDWKELMNRQAHPSH).

This sequence belongs to the FAM200 family.

The protein localises to the membrane. The chain is Protein FAM200A (FAM200A) from Macaca fascicularis (Crab-eating macaque).